A 486-amino-acid chain; its full sequence is CUGBP Elav-like family member 5 (486 aa).

Residues 1–11 (MARLTEREARR) show a composition bias toward basic and acidic residues. The segment at 1–39 (MARLTEREARRQQQQHPPQQQQPRACPMSGPEPPAQQSD) is disordered. Residues 12 to 24 (QQQQHPPQQQQPR) are compositionally biased toward low complexity. RRM domains follow at residues 47-128 (IKLF…PADS), 135-215 (RKLF…FADT), and 401-479 (CNLF…LKRP).

Belongs to the CELF/BRUNOL family.

It localises to the nucleus. Its subcellular location is the cytoplasm. In terms of biological role, RNA-binding protein that may be implicated in the regulation of pre-mRNA alternative splicing. This is CUGBP Elav-like family member 5 (celf5) from Xenopus tropicalis (Western clawed frog).